The following is a 218-amino-acid chain: Large ribosomal subunit protein uL3 (218 aa).

The interval 133 to 158 (RGQGASHGAQAVHRRPGSIGGCATPG) is disordered.

The protein belongs to the universal ribosomal protein uL3 family. In terms of assembly, part of the 50S ribosomal subunit. Forms a cluster with proteins L14 and L19.

Functionally, one of the primary rRNA binding proteins, it binds directly near the 3'-end of the 23S rRNA, where it nucleates assembly of the 50S subunit. In Mycolicibacterium vanbaalenii (strain DSM 7251 / JCM 13017 / BCRC 16820 / KCTC 9966 / NRRL B-24157 / PYR-1) (Mycobacterium vanbaalenii), this protein is Large ribosomal subunit protein uL3.